The primary structure comprises 432 residues: Histidine--tRNA ligase (432 aa).

This sequence belongs to the class-II aminoacyl-tRNA synthetase family.

It is found in the cytoplasm. It carries out the reaction tRNA(His) + L-histidine + ATP = L-histidyl-tRNA(His) + AMP + diphosphate + H(+). The polypeptide is Histidine--tRNA ligase (Halobacterium salinarum (strain ATCC 29341 / DSM 671 / R1)).